A 303-amino-acid polypeptide reads, in one-letter code: tRNA dimethylallyltransferase (303 aa).

Residue 13–20 (GPTASGKS) coordinates ATP. 15–20 (TASGKS) provides a ligand contact to substrate. Interaction with substrate tRNA stretches follow at residues 38–41 (DSMQ) and 162–166 (QRLLR).

The protein belongs to the IPP transferase family. As to quaternary structure, monomer. Requires Mg(2+) as cofactor.

The catalysed reaction is adenosine(37) in tRNA + dimethylallyl diphosphate = N(6)-dimethylallyladenosine(37) in tRNA + diphosphate. In terms of biological role, catalyzes the transfer of a dimethylallyl group onto the adenine at position 37 in tRNAs that read codons beginning with uridine, leading to the formation of N6-(dimethylallyl)adenosine (i(6)A). The polypeptide is tRNA dimethylallyltransferase (Methylocella silvestris (strain DSM 15510 / CIP 108128 / LMG 27833 / NCIMB 13906 / BL2)).